A 230-amino-acid polypeptide reads, in one-letter code: Complex I assembly factor TMEM126B, mitochondrial (230 aa).

4 helical membrane passes run 70-92 (LNIHGTLVFGTSSSLSGIMANLV), 107-126 (YASLTTLPVLATIVSYKLFV), 139-161 (SCVLRSALIGMACGVSYPSALAF), and 196-218 (AMAIPLFFQIVMGAFTGLHHYNI).

This sequence belongs to the TMEM126 family. As to quaternary structure, part of the mitochondrial complex I assembly/MCIA complex that comprises at least the core subunits TMEM126B, NDUFAF1, ECSIT and ACAD9 and complement subunits such as COA1 and TMEM186. Associates with the intermediate 370 kDa subcomplex of incompletely assembled complex I. Interacts with TMEM70.

It is found in the mitochondrion membrane. Its function is as follows. As part of the MCIA complex, involved in the assembly of the mitochondrial complex I. Participates in constructing the membrane arm of complex I. The sequence is that of Complex I assembly factor TMEM126B, mitochondrial from Mus musculus (Mouse).